A 931-amino-acid polypeptide reads, in one-letter code: Protein unc-45 homolog B (931 aa).

TPR repeat units follow at residues 6–39 (AAQLKEEGNRHFQLQDYKAATKSYSQALKLTKDK), 43–76 (ATLYRNRAACGLKMESYAQAASDASRAIDINSAD), and 77–110 (IKALYRRCQALEHLGKLDQAFKDVQRCATLEPRN). 3 ARM repeats span residues 169–208 (EAGAERIFQSNGVALLLQLMNTQRPELLLAAVRTLSGMCS), 211–250 (RARATAILHAVRIDRICSLMALENEEMSLAVCNLLQAIID), and 751–790 (DKLRQKIFKEKALPDIENYMFENHDQLRQAATECMCNMVL).

As to quaternary structure, interacts with HSP90 in an ATP-independent manner. Interacts with UBE4B; the interaction may target UNC45B for proteasomal degradation. Highly expressed in adult skeletal muscle and heart. Detected at intermediate levels in lung. Highly expressed in embryonic heart.

It is found in the cytoplasm. The protein resides in the myofibril. Its subcellular location is the sarcomere. It localises to the z line. The protein localises to the a band. It is found in the perinuclear region. The protein resides in the cytosol. Its function is as follows. Acts as a co-chaperone for HSP90 and is required for proper folding of the myosin motor domain. Plays a role in sarcomere formation during muscle cell development. Is necessary for normal early lens development. This Mus musculus (Mouse) protein is Protein unc-45 homolog B (Unc45b).